The chain runs to 89 residues: MTTSQKHRDFVAEPMGEKPVGSLAGIGEVLGKKLEERGFDKAYVVLGQFLVLKKDEDLFREWLKDTCGANAKQSRDCFGCLREWCDAFL.

Residue Met-1 is modified to N-acetylmethionine. Thr-2 bears the N-acetylthreonine; in Barrier-to-autointegration factor, N-terminally processed mark. 2 positions are modified to phosphothreonine; by VRK1 and VRK2: Thr-2 and Thr-3. At Ser-4 the chain carries Phosphoserine; by VRK1 and VRK2. The 16-residue stretch at 20–35 folds into the HhH domain; it reads VGSLAGIGEVLGKKLE.

Belongs to the BAF family. In terms of assembly, homodimer. Heterodimerizes with BANF2. Interacts with ANKLE2/LEM4, leading to decreased phosphorylation by VRK1 and promoting dephosphorylation by protein phosphatase 2A (PP2A). Binds non-specifically to double-stranded DNA, and is found as a hexamer or dodecamer upon DNA binding. Binds to LEM domain-containing nuclear proteins such as LEMD3/MAN1, TMPO/LAP2 and EMD (emerin). Interacts with ANKLE1 (via LEM domain); the interaction may favor BANF1 dimerization. Interacts with CRX and LMNA (lamin-A). Binds linker histone H1.1 and core histones H3. Interacts with LEMD2 (via LEM domain). Interacts with PARP1; interaction takes place in response to oxidative DNA damage. Post-translationally, ser-4 is the major site of phosphorylation as compared to Thr-2 and Thr-3. Phosphorylation on Thr-2; Thr-3 and Ser-4 disrupts its ability to bind DNA and reduces its ability to bind LEM domain-containing proteins. Non phosphorylated BAF seems to enhance binding between EMD and LMNA. Dephosphorylated by protein phosphatase 2A (PP2A) following interaction with ANKLE2/LEM4 during mitotic exit, leading to mitotic nuclear envelope reassembly.

Its subcellular location is the nucleus. It localises to the chromosome. It is found in the nucleus envelope. The protein resides in the cytoplasm. Functionally, non-specific DNA-binding protein that plays key roles in mitotic nuclear reassembly, chromatin organization, DNA damage response, gene expression and intrinsic immunity against foreign DNA. Contains two non-specific double-stranded DNA (dsDNA)-binding sites which promote DNA cross-bridging. Plays a key role in nuclear membrane reformation at the end of mitosis by driving formation of a single nucleus in a spindle-independent manner. Transiently cross-bridges anaphase chromosomes via its ability to bridge distant DNA sites, leading to the formation of a dense chromatin network at the chromosome ensemble surface that limits membranes to the surface. Also acts as a negative regulator of innate immune activation by restricting CGAS activity toward self-DNA upon acute loss of nuclear membrane integrity. Outcompetes CGAS for DNA-binding, thereby preventing CGAS activation and subsequent damaging autoinflammatory responses. Also involved in DNA damage response: interacts with PARP1 in response to oxidative stress, thereby inhibiting the ADP-ribosyltransferase activity of PARP1. Involved in the recognition of exogenous dsDNA in the cytosol: associates with exogenous dsDNA immediately after its appearance in the cytosol at endosome breakdown and is required to avoid autophagy. In case of poxvirus infection, has an antiviral activity by blocking viral DNA replication. The protein is Barrier-to-autointegration factor (BANF1) of Bos taurus (Bovine).